Reading from the N-terminus, the 168-residue chain is Disulfide bond formation protein B (168 aa).

Residues 1-6 (MTSRWI) lie on the Cytoplasmic side of the membrane. The helical transmembrane segment at 7 to 23 (FGLVFLVCAGLLAVAFY) threads the bilayer. At 24-41 (MEHVMGLEPCPLCWLQRF) the chain is on the periplasmic side. Residues Cys-33 and Cys-36 are joined by a disulfide bond. The helical transmembrane segment at 42 to 58 (GFMGAGLVSLLAFLHGP) threads the bilayer. Topologically, residues 59-65 (RGFGNRV) are cytoplasmic. The helical transmembrane segment at 66 to 82 (YGLLLIVAAGAGLAVAG) threads the bilayer. Topologically, residues 83 to 139 (RQLWLQSLPADQVPACGPSVDYMLEVLPWFEVLQTALKGTGDCAEVVWRFLGLSIPG) are periplasmic. An intrachain disulfide couples Cys-98 to Cys-125. The chain crosses the membrane as a helical span at residues 140–158 (WTAVFFSLLIVLGLFVMLR). Residues 159-168 (RYSPRDWLQS) lie on the Cytoplasmic side of the membrane.

This sequence belongs to the DsbB family.

Its subcellular location is the cell inner membrane. Its function is as follows. Required for disulfide bond formation in some periplasmic proteins. Acts by oxidizing the DsbA protein. This chain is Disulfide bond formation protein B, found in Marinobacter nauticus (strain ATCC 700491 / DSM 11845 / VT8) (Marinobacter aquaeolei).